The sequence spans 117 residues: uncharacterized protein (117 aa).

Over residues 1–12 the composition is skewed to polar residues; that stretch reads MAQNSVSLSAGD. 2 disordered regions span residues 1-30 and 43-87; these read MAQN…NPSA and VTRL…SPYP.

This is an uncharacterized protein from Mus musculus (Mouse).